Consider the following 105-residue polypeptide: Small ribosomal subunit protein uS10 (105 aa).

Belongs to the universal ribosomal protein uS10 family. As to quaternary structure, part of the 30S ribosomal subunit.

Functionally, involved in the binding of tRNA to the ribosomes. This Synechococcus sp. (strain JA-3-3Ab) (Cyanobacteria bacterium Yellowstone A-Prime) protein is Small ribosomal subunit protein uS10.